The primary structure comprises 228 residues: Sugar fermentation stimulation protein homolog (228 aa).

It belongs to the SfsA family.

The protein is Sugar fermentation stimulation protein homolog of Desulfitobacterium hafniense (strain DSM 10664 / DCB-2).